The sequence spans 875 residues: uncharacterized protein (875 aa).

The disordered stretch occupies residues 83–149; the sequence is PFQPPPPQPF…QPPQPPPQQL (67 aa). A compositionally biased stretch (pro residues) spans 101–147; that stretch reads QQPPQPPPDQPQQPQPPQQPPQQPPQQQPQPPQPPQQPPQPPQPPPQ.

This is an uncharacterized protein from Orgyia pseudotsugata multicapsid polyhedrosis virus (OpMNPV).